The primary structure comprises 464 residues: MKTFPQAFLWGGATAANQVEGAYLEDGKGLTTSDVQPRGVFGDVVERVPGDSGIKDIAIDFYHRYPEDISLFAEMGFNCLRVSIAWARIFPHGDEAQPNEAGLAFYDKLFDEMAKHNITPLVTLSHYEMPWALVKNYGGWGNRKVIGFFERYARTVFERYQAKVKLWLTFNEINMSLHAPMTGVGLPADSSKAEVYQAIHHQLVASALAAKACHDIVPEGKIGNMLLGGLMYPLSCKPDDIFETLQQNRSWQFFGDVQCRGAYPGYMLRYFRDNGINLDITDADRAALKETVDFISFSYYMTGCVTADEELNKKARGNILSMVPNPHLASSEWGWQIDPLGLRTLLNVLWDRYQKPLFIVENGLGAKDKVEADGSINDDYRISYLNDHLVQVREAIEDGVELMGYTSWGPIDLVSASKAEMSKRYGFIYVDRDDDGNGTLARSRKKSFWWYKEVIATNGGSLKE.

The active-site Proton donor is Glu172. The active-site Nucleophile is the Glu361.

It belongs to the glycosyl hydrolase 1 family.

This Klebsiella oxytoca protein is Phospho-cellobiase (casB).